Consider the following 379-residue polypeptide: UDP-4-amino-4-deoxy-L-arabinose--oxoglutarate aminotransferase (379 aa).

Lys-182 is subject to N6-(pyridoxal phosphate)lysine.

It belongs to the DegT/DnrJ/EryC1 family. ArnB subfamily. In terms of assembly, homodimer. It depends on pyridoxal 5'-phosphate as a cofactor.

The catalysed reaction is UDP-4-amino-4-deoxy-beta-L-arabinose + 2-oxoglutarate = UDP-beta-L-threo-pentopyranos-4-ulose + L-glutamate. It functions in the pathway nucleotide-sugar biosynthesis; UDP-4-deoxy-4-formamido-beta-L-arabinose biosynthesis; UDP-4-deoxy-4-formamido-beta-L-arabinose from UDP-alpha-D-glucuronate: step 2/3. Its pathway is bacterial outer membrane biogenesis; lipopolysaccharide biosynthesis. Functionally, catalyzes the conversion of UDP-4-keto-arabinose (UDP-Ara4O) to UDP-4-amino-4-deoxy-L-arabinose (UDP-L-Ara4N). The modified arabinose is attached to lipid A and is required for resistance to polymyxin and cationic antimicrobial peptides. The protein is UDP-4-amino-4-deoxy-L-arabinose--oxoglutarate aminotransferase of Escherichia coli O7:K1 (strain IAI39 / ExPEC).